We begin with the raw amino-acid sequence, 260 residues long: Ubiquinone/menaquinone biosynthesis C-methyltransferase UbiE (260 aa).

Residues T83, D104, and 132-133 (NA) contribute to the S-adenosyl-L-methionine site.

Belongs to the class I-like SAM-binding methyltransferase superfamily. MenG/UbiE family.

It catalyses the reaction a 2-demethylmenaquinol + S-adenosyl-L-methionine = a menaquinol + S-adenosyl-L-homocysteine + H(+). The enzyme catalyses a 2-methoxy-6-(all-trans-polyprenyl)benzene-1,4-diol + S-adenosyl-L-methionine = a 5-methoxy-2-methyl-3-(all-trans-polyprenyl)benzene-1,4-diol + S-adenosyl-L-homocysteine + H(+). It functions in the pathway quinol/quinone metabolism; menaquinone biosynthesis; menaquinol from 1,4-dihydroxy-2-naphthoate: step 2/2. It participates in cofactor biosynthesis; ubiquinone biosynthesis. Its function is as follows. Methyltransferase required for the conversion of demethylmenaquinol (DMKH2) to menaquinol (MKH2) and the conversion of 2-polyprenyl-6-methoxy-1,4-benzoquinol (DDMQH2) to 2-polyprenyl-3-methyl-6-methoxy-1,4-benzoquinol (DMQH2). The sequence is that of Ubiquinone/menaquinone biosynthesis C-methyltransferase UbiE from Bartonella tribocorum (strain CIP 105476 / IBS 506).